A 308-amino-acid chain; its full sequence is Homeobox protein abdominal-A homolog (308 aa).

The segment at residues 138–197 is a DNA-binding region (homeobox); sequence RRRGRQTYTRFQTLELEKEFHFNHYLTRRRRIEIAHALCLTERQIKIWFQNRRMKLKKEL. Residues 207–221 are compositionally biased toward basic and acidic residues; it reads ARREREEQDKMKNES. Positions 207 to 277 are disordered; it reads ARREREEQDK…SGNLGSHLHH (71 aa). A compositionally biased stretch (low complexity) spans 223-247; that stretch reads KSAQQHHSQKQAQQEHTVVGSQQTS. Gly residues predominate over residues 248–269; the sequence is NGGGTGGGTGGSGGAGSGGSSG.

The protein belongs to the Antp homeobox family.

It is found in the nucleus. Functionally, sequence-specific transcription factor which is part of a developmental regulatory system that provides cells with specific positional identities on the anterior-posterior axis. This Anopheles gambiae (African malaria mosquito) protein is Homeobox protein abdominal-A homolog.